A 78-amino-acid chain; its full sequence is DNA-directed RNA polymerase subunit omega (78 aa).

The protein belongs to the RNA polymerase subunit omega family. As to quaternary structure, in cyanobacteria the RNAP catalytic core is composed of 2 alpha, 1 beta, 1 beta', 1 gamma and 1 omega subunit. When a sigma factor is associated with the core the holoenzyme is formed, which can initiate transcription.

The catalysed reaction is RNA(n) + a ribonucleoside 5'-triphosphate = RNA(n+1) + diphosphate. Functionally, promotes RNA polymerase assembly. Latches the N- and C-terminal regions of the beta' subunit thereby facilitating its interaction with the beta and alpha subunits. This chain is DNA-directed RNA polymerase subunit omega, found in Trichormus variabilis (strain ATCC 29413 / PCC 7937) (Anabaena variabilis).